The following is a 252-amino-acid chain: F-box/SPRY domain-containing protein 1 (252 aa).

The region spanning 1 to 48 is the F-box domain; the sequence is MVDPLCNYNVLEAIFSYLELNDLYRCSQVCKSWYHFLNDENSDVWRWH. One can recognise a B30.2/SPRY domain in the interval 58–250; sequence VKSDLLASVS…VSMVYLGTPL (193 aa).

It belongs to the FBXO45/Fsn family. In terms of assembly, component of an E3 ubiquitin ligase complex composed of hiw and Fsn.

It localises to the synapse. The protein operates within protein modification; protein ubiquitination. In terms of biological role, required in the presynaptic motoneuron to down-regulate the levels of wnd and restrain synaptic terminal growth at the neuromuscular junction (NMJ). This is F-box/SPRY domain-containing protein 1 from Drosophila virilis (Fruit fly).